The primary structure comprises 350 residues: Ion-translocating oxidoreductase complex subunit D (350 aa).

4 helical membrane-spanning segments follow: residues 37-57 (YYFGYGTLVQLLLAITVAYLA), 78-109 (ALVTASLLAVAIPPLAPWWLIVIGTLFAIVIV), 124-144 (AMAAYVLLLISFPVQMTSWVA), and 158-178 (TFNSIFQLNAGYAADFFHLAI). Residue Thr-185 is modified to FMN phosphoryl threonine. Transmembrane regions (helical) follow at residues 212 to 232 (SVGEGWFWVNMAYLVGGLVML), 239 to 259 (WHISGAIVLTLFVCASIGFLI), 264 to 284 (FVSPIMHLFSGGTMLAAFFIA), 298 to 318 (LIFGAMIGLLIYLIRTFGGYP), and 319 to 339 (DAVAFAVLLANMCAPFIDYYV).

It belongs to the NqrB/RnfD family. As to quaternary structure, the complex is composed of six subunits: RnfA, RnfB, RnfC, RnfD, RnfE and RnfG. It depends on FMN as a cofactor.

It localises to the cell inner membrane. In terms of biological role, part of a membrane-bound complex that couples electron transfer with translocation of ions across the membrane. The chain is Ion-translocating oxidoreductase complex subunit D from Shewanella frigidimarina (strain NCIMB 400).